The primary structure comprises 428 residues: Proteinase-activated receptor 1 (428 aa).

Residues 1-21 form the signal peptide; it reads MGPQRLLLVAAGLSLCGPLLS. Positions 22–41 are cleaved as a propeptide — removed for receptor activation; the sequence is SRVPVRQPESEMTDATVNPR. The Extracellular portion of the chain corresponds to 42-105; the sequence is SFFLRNPGEN…SGYLTSPWLR (64 aa). Residues asparagine 65 and asparagine 78 are each glycosylated (N-linked (GlcNAc...) asparagine). The helical transmembrane segment at 106–131 threads the bilayer; the sequence is LFIPSVYTFVFVVSLPLNILAIAVFV. Residues 132 to 140 lie on the Cytoplasmic side of the membrane; that stretch reads LKMKVKKPA. A helical transmembrane segment spans residues 141–160; the sequence is VVYMLHLAMADVLFVSVLPL. Residues 161-179 are Extracellular-facing; it reads KISYYFSGSDWQFGSGMCR. Cysteine 178 and cysteine 257 are disulfide-bonded. The chain crosses the membrane as a helical span at residues 180 to 201; that stretch reads FATAAFYCNMYASIMLMTVISI. The Cytoplasmic segment spans residues 202-221; that stretch reads DRFLAVVYPIQSLSWRTLGR. The helical transmembrane segment at 222–242 threads the bilayer; sequence ANFTCLVIWVMAIMGVVPLLL. Over 243–271 the chain is Extracellular; that stretch reads KEQTTRVPGLNITTCHDVLNETLLQGFYS. 2 N-linked (GlcNAc...) asparagine glycosylation sites follow: asparagine 253 and asparagine 262. A helical transmembrane segment spans residues 272–291; it reads YYFSAFSAVFFLVPLIISTI. The Cytoplasmic portion of the chain corresponds to 292 to 314; sequence CYMSIIRCLSSSSVANRSKKSRA. Residues 315–337 form a helical membrane-spanning segment; sequence LFLSAAVFCVFIVCFGPTNVLLI. At 338–352 the chain is on the extracellular side; it reads MHYLLLSDSPATEKA. Residues 353–377 traverse the membrane as a helical segment; the sequence is YFAYLLCVCVSSVSCCIDPLIYYYA. The Cytoplasmic portion of the chain corresponds to 378–428; sequence SSECQRHLYGILCCKESSDPNSYNSTGQLMPSKMDTCSSHLNNSIYKKLLA. Serine 421 is subject to Phosphoserine.

Belongs to the G-protein coupled receptor 1 family. In terms of processing, proteolytic cleavage by thrombin generates a new N-terminus that functions as a tethered ligand. Also proteolytically cleaved by cathepsin CTSG. Phosphorylated in the C-terminal tail; probably mediating desensitization prior to the uncoupling and internalization of the receptor.

It localises to the cell membrane. Its function is as follows. High affinity receptor that binds the activated thrombin, leading to calcium release from intracellular stores. The thrombin-activated receptor signaling pathway is mediated through PTX-insensitive G proteins, activation of phospholipase C resulting in the production of 1D-myo-inositol 1,4,5-trisphosphate (InsP3) which binds to InsP3 receptors causing calcium release from the stores. In astrocytes, the calcium released into the cytosol allows the Ca(2+)-dependent release of L-glutamate into the synaptic cleft through BEST1, that targets the neuronal postsynaptic GRIN2A/NMDAR receptor resulting in the synaptic plasticity regulation. May play a role in platelets activation and in vascular development. Mediates up-regulation of pro-inflammatory cytokines, such as MCP-1/CCL2 and IL6, triggered by coagulation factor Xa (F10) in cardiac fibroblasts and umbilical vein endothelial cells. In Cricetulus longicaudatus (Long-tailed dwarf hamster), this protein is Proteinase-activated receptor 1.